Reading from the N-terminus, the 354-residue chain is MGCATSAEDKAAAERSKAIDRNLRIDGEKAAREVKLLLLGAGESGKSTIVKQMKIIHEEGYSEEDCKQYKPVVYSNTIQSMIAIIRAMGSLKVDFGDGDRTDDARQLFALAGQAEEGELSPELAAVMKRLWADGGVQGCFSRSREYQLNDSASYYLNALDRLAAPGYIPTQQDVLRTRVKTTGIVETHFTFKDLHFKMFDVGGQRSERKKWIHCFEGVTAIIFCVALSAYDLVLAEDEEMNRMHESMKLFDSICNNKWFTETSIILFLNKKDLFEEKITKSPLTICFPEYTGSNTYEEAAAYIQMQFEDLNKRKDQKEIYTHFTCATDTNNIQFVFDAVTDVIIKNNLKDCGLF.

Glycine 2 is lipidated: N-myristoyl glycine. Cysteine 3 carries the S-palmitoyl cysteine lipid modification. The G-alpha domain maps to 32–354 (REVKLLLLGA…KNNLKDCGLF (323 aa)). The interval 35–48 (KLLLLGAGESGKST) is G1 motif. Residues 40–47 (GAGESGKS), 175–181 (LRTRVKT), 200–204 (DVGGQ), 269–272 (NKKD), and alanine 326 each bind GTP. Serine 47 and threonine 181 together coordinate Mg(2+). A G2 motif region spans residues 173 to 181 (DVLRTRVKT). The G3 motif stretch occupies residues 196–205 (FKMFDVGGQR). Residues 265–272 (ILFLNKKD) form a G4 motif region. The tract at residues 324-329 (TCATDT) is G5 motif.

This sequence belongs to the G-alpha family. G(i/o/t/z) subfamily. As to quaternary structure, g proteins are composed of 3 units; alpha, beta and gamma. The alpha chain contains the guanine nucleotide binding site.

Functionally, guanine nucleotide-binding proteins (G proteins) are involved as modulators or transducers in various transmembrane signaling systems. This G protein is involved in 1-methyladenine-induced oocyte maturation. This is Guanine nucleotide-binding protein G(i) subunit alpha from Patiria pectinifera (Starfish).